Reading from the N-terminus, the 937-residue chain is Periplasmic nitrate reductase (937 aa).

The segment at residues 1-42 (MTSKIQGKKPTLSRRDFIKSAAAASAAASVGLSIPSVMSAEA) is a signal peptide (tat-type signal). The region spanning 49-110 (WKWDKSVCRF…FCAKIMYGAD (62 aa)) is the 4Fe-4S Mo/W bis-MGD-type domain. Positions 56, 59, 63, and 96 each coordinate [4Fe-4S] cluster. Mo-bis(molybdopterin guanine dinucleotide)-binding positions include Lys98, Gln166, Asn191, Cys195, 228 to 235 (WGANMAEM), Met433, Gln437, Asn543, 568 to 569 (SE), Lys591, Asp618, and 827 to 836 (TGRVLEHWHS). Trp903 is a substrate binding site. Mo-bis(molybdopterin guanine dinucleotide)-binding residues include Asn911 and Lys928.

It belongs to the prokaryotic molybdopterin-containing oxidoreductase family. NasA/NapA/NarB subfamily. In terms of assembly, component of the periplasmic nitrate reductase NapAB complex composed of NapA and NapB. [4Fe-4S] cluster serves as cofactor. Requires Mo-bis(molybdopterin guanine dinucleotide) as cofactor. In terms of processing, predicted to be exported by the Tat system. The position of the signal peptide cleavage has not been experimentally proven.

It is found in the periplasm. It catalyses the reaction 2 Fe(II)-[cytochrome] + nitrate + 2 H(+) = 2 Fe(III)-[cytochrome] + nitrite + H2O. Functionally, catalytic subunit of the periplasmic nitrate reductase complex NapAB. Receives electrons from NapB and catalyzes the reduction of nitrate to nitrite. This Helicobacter hepaticus (strain ATCC 51449 / 3B1) protein is Periplasmic nitrate reductase.